A 492-amino-acid polypeptide reads, in one-letter code: Probable glycine dehydrogenase (decarboxylating) subunit 2 (492 aa).

Lys-274 carries the post-translational modification N6-(pyridoxal phosphate)lysine.

The protein belongs to the GcvP family. C-terminal subunit subfamily. In terms of assembly, the glycine cleavage system is composed of four proteins: P, T, L and H. In this organism, the P 'protein' is a heterodimer of two subunits. Pyridoxal 5'-phosphate is required as a cofactor.

The enzyme catalyses N(6)-[(R)-lipoyl]-L-lysyl-[glycine-cleavage complex H protein] + glycine + H(+) = N(6)-[(R)-S(8)-aminomethyldihydrolipoyl]-L-lysyl-[glycine-cleavage complex H protein] + CO2. Functionally, the glycine cleavage system catalyzes the degradation of glycine. The P protein binds the alpha-amino group of glycine through its pyridoxal phosphate cofactor; CO(2) is released and the remaining methylamine moiety is then transferred to the lipoamide cofactor of the H protein. The chain is Probable glycine dehydrogenase (decarboxylating) subunit 2 from Staphylococcus saprophyticus subsp. saprophyticus (strain ATCC 15305 / DSM 20229 / NCIMB 8711 / NCTC 7292 / S-41).